We begin with the raw amino-acid sequence, 278 residues long: 3-methyl-2-oxobutanoate hydroxymethyltransferase (278 aa).

Positions 43 and 82 each coordinate Mg(2+). Residues 43–44 (DS), aspartate 82, and lysine 112 each bind 3-methyl-2-oxobutanoate. Glutamate 114 contributes to the Mg(2+) binding site. Catalysis depends on glutamate 181, which acts as the Proton acceptor.

It belongs to the PanB family. As to quaternary structure, homodecamer; pentamer of dimers. Requires Mg(2+) as cofactor.

It is found in the cytoplasm. The catalysed reaction is 3-methyl-2-oxobutanoate + (6R)-5,10-methylene-5,6,7,8-tetrahydrofolate + H2O = 2-dehydropantoate + (6S)-5,6,7,8-tetrahydrofolate. It functions in the pathway cofactor biosynthesis; (R)-pantothenate biosynthesis; (R)-pantoate from 3-methyl-2-oxobutanoate: step 1/2. In terms of biological role, catalyzes the reversible reaction in which hydroxymethyl group from 5,10-methylenetetrahydrofolate is transferred onto alpha-ketoisovalerate to form ketopantoate. The protein is 3-methyl-2-oxobutanoate hydroxymethyltransferase of Bacillus cereus (strain B4264).